The primary structure comprises 209 residues: uncharacterized protein (209 aa).

The protein resides in the plastid. Its subcellular location is the chloroplast. This is an uncharacterized protein from Porphyra purpurea (Red seaweed).